The primary structure comprises 378 residues: MTKMSNLPNDLAEEVLSRVSLTSLRNVRLTCKDWNTLSKGESFAKNHLGYQAIVAAKEKEFMMVLMMDFRVYLIRVNVHNDIESCIKPEGELISLGDEVDVSQVFHCDGLLLCITEDNEDNAKVVLWNPYWGQTRWIESTNNFHKLDMYTYALGYKKSSKSSRSYKILRFIDFSPTCSEFKIYNINSDSWKVLDVSPDWKIDSYIRGVSLKGNTYWIARERHGYGHTFLVCFDFTRERFRSRLPLPSQPCVLDTVSLSSVREEQLAVLFQCSSTLEMQIWVTTKIEPNAVLWNSKVFLAVDMHSLKFQFQVRASSFFIDEEKRVVVVFDKEKRYLASSRNKAYIVGVDGTWEQVDLGMSVDKFVYPLVCSYVPSLVHF.

In terms of domain architecture, F-box spans 1–47 (MTKMSNLPNDLAEEVLSRVSLTSLRNVRLTCKDWNTLSKGESFAKNH).

The protein is Putative F-box protein At3g24580 of Arabidopsis thaliana (Mouse-ear cress).